Here is a 715-residue protein sequence, read N- to C-terminus: NADH-ubiquinone oxidoreductase chain 5 (715 aa).

17 consecutive transmembrane segments (helical) span residues 1-21 (MYLS…FFGR), 30-50 (LITC…FFEV), 81-101 (LTVA…IYSI), 119-139 (LFTF…MFVG), 140-160 (WEGV…RIAA), 177-197 (FLTI…YATV), 200-220 (LAPY…LIGA), 241-261 (TPVS…YLLM), 274-294 (LLLC…IGLF), 310-330 (LGMM…FHLI), 331-351 (NHAF…HAVA), 366-386 (LPLT…FPYM), 403-423 (FSFS…FTTL), 487-507 (GFFL…FGFI), 543-563 (TLFK…ALVL), 647-667 (IVTN…FTFI), and 668-688 (SLLE…LSLT).

Belongs to the complex I subunit 5 family.

It is found in the mitochondrion inner membrane. The enzyme catalyses a ubiquinone + NADH + 5 H(+)(in) = a ubiquinol + NAD(+) + 4 H(+)(out). Core subunit of the mitochondrial membrane respiratory chain NADH dehydrogenase (Complex I) that is believed to belong to the minimal assembly required for catalysis. Complex I functions in the transfer of electrons from NADH to the respiratory chain. The immediate electron acceptor for the enzyme is believed to be ubiquinone. This is NADH-ubiquinone oxidoreductase chain 5 (ndh-5) from Neurospora crassa (strain ATCC 24698 / 74-OR23-1A / CBS 708.71 / DSM 1257 / FGSC 987).